The primary structure comprises 280 residues: MGNMIKKASLIALLPLFTAAAAAATDAETSMESGSSSHLKSFLMSVSMIGLSEIGDKTFLIAALMAMRHKRVLVFSAAATSLAIMTILSGVVGHSAVAFLSERYTAFFAGILFLVFGYKLTMEGLEMSKDAGVEEEMAEVEEEIAIKDMNQDMDDVEKGGDTAYDKQLKNASIGKKIVHRIRELASFMFSPVWVQIFLMVFLGELGDRSQISIIAMATDSDYWYVIAGAVIGHAICSGLAVVGGKLLATRISIRTITLASSLLFFIFALMYIYQAFTTQD.

Topologically, residues 1–3 (MGN) are cytoplasmic. The chain crosses the membrane as a helical span at residues 4–24 (MIKKASLIALLPLFTAAAAAA). Residues 25 to 45 (TDAETSMESGSSSHLKSFLMS) are Vacuolar-facing. The helical transmembrane segment at 46–66 (VSMIGLSEIGDKTFLIAALMA) threads the bilayer. The Cytoplasmic portion of the chain corresponds to 67-71 (MRHKR). A helical transmembrane segment spans residues 72-92 (VLVFSAAATSLAIMTILSGVV). Topologically, residues 93–104 (GHSAVAFLSERY) are vacuolar. Residues 105-125 (TAFFAGILFLVFGYKLTMEGL) form a helical membrane-spanning segment. The Cytoplasmic portion of the chain corresponds to 126 to 183 (EMSKDAGVEEEMAEVEEEIAIKDMNQDMDDVEKGGDTAYDKQLKNASIGKKIVHRIRE). Residues 184-204 (LASFMFSPVWVQIFLMVFLGE) form a helical membrane-spanning segment. Over 205–222 (LGDRSQISIIAMATDSDY) the chain is Vacuolar. Residues 223 to 243 (WYVIAGAVIGHAICSGLAVVG) form a helical membrane-spanning segment. Over 244–255 (GKLLATRISIRT) the chain is Cytoplasmic. Residues 256-276 (ITLASSLLFFIFALMYIYQAF) form a helical membrane-spanning segment. Topologically, residues 277–280 (TTQD) are vacuolar.

Belongs to the GDT1 family.

Its subcellular location is the golgi apparatus. It localises to the cis-Golgi network membrane. The enzyme catalyses Ca(2+)(in) + n H(+)(out) = Ca(2+)(out) + n H(+)(in). It catalyses the reaction Mn(2+)(in) + n H(+)(out) = Mn(2+)(out) + n H(+)(in). Functionally, divalent cation:proton antiporter that exchanges calcium or manganese ions for protons across the Golgi membrane. Mediates the reversible transport of calcium or manganese to the Golgi lumen driven by the proton gradient and possibly the membrane potential generated by V-ATPase. Provides calcium or manganese cofactors to resident Golgi enzymes and contributes to the maintenance of an acidic luminal Golgi pH required for proper functioning of the secretory pathway. The transport stoichiometry remains to be elucidated. This Saccharomyces cerevisiae (strain ATCC 204508 / S288c) (Baker's yeast) protein is Divalent cation/proton antiporter GDT1.